A 92-amino-acid polypeptide reads, in one-letter code: Signal recognition particle 19 kDa protein (92 aa).

Belongs to the SRP19 family. As to quaternary structure, part of the signal recognition particle protein translocation system, which is composed of SRP and FtsY. Archaeal SRP consists of a 7S RNA molecule of 300 nucleotides and two protein subunits: SRP54 and SRP19.

It localises to the cytoplasm. Involved in targeting and insertion of nascent membrane proteins into the cytoplasmic membrane. Binds directly to 7S RNA and mediates binding of the 54 kDa subunit of the SRP. In Haloarcula marismortui (strain ATCC 43049 / DSM 3752 / JCM 8966 / VKM B-1809) (Halobacterium marismortui), this protein is Signal recognition particle 19 kDa protein.